The primary structure comprises 242 residues: 3-deoxy-manno-octulosonate cytidylyltransferase (242 aa).

Belongs to the KdsB family.

The protein localises to the cytoplasm. The catalysed reaction is 3-deoxy-alpha-D-manno-oct-2-ulosonate + CTP = CMP-3-deoxy-beta-D-manno-octulosonate + diphosphate. The protein operates within nucleotide-sugar biosynthesis; CMP-3-deoxy-D-manno-octulosonate biosynthesis; CMP-3-deoxy-D-manno-octulosonate from 3-deoxy-D-manno-octulosonate and CTP: step 1/1. It participates in bacterial outer membrane biogenesis; lipopolysaccharide biosynthesis. Functionally, activates KDO (a required 8-carbon sugar) for incorporation into bacterial lipopolysaccharide in Gram-negative bacteria. This Anaeromyxobacter dehalogenans (strain 2CP-1 / ATCC BAA-258) protein is 3-deoxy-manno-octulosonate cytidylyltransferase.